We begin with the raw amino-acid sequence, 318 residues long: Acetyl-coenzyme A carboxylase carboxyl transferase subunit alpha (318 aa).

One can recognise a CoA carboxyltransferase C-terminal domain in the interval Glu-36–Gln-293.

The protein belongs to the AccA family. In terms of assembly, acetyl-CoA carboxylase is a heterohexamer composed of biotin carboxyl carrier protein (AccB), biotin carboxylase (AccC) and two subunits each of ACCase subunit alpha (AccA) and ACCase subunit beta (AccD).

Its subcellular location is the cytoplasm. The enzyme catalyses N(6)-carboxybiotinyl-L-lysyl-[protein] + acetyl-CoA = N(6)-biotinyl-L-lysyl-[protein] + malonyl-CoA. Its pathway is lipid metabolism; malonyl-CoA biosynthesis; malonyl-CoA from acetyl-CoA: step 1/1. Component of the acetyl coenzyme A carboxylase (ACC) complex. First, biotin carboxylase catalyzes the carboxylation of biotin on its carrier protein (BCCP) and then the CO(2) group is transferred by the carboxyltransferase to acetyl-CoA to form malonyl-CoA. This Teredinibacter turnerae (strain ATCC 39867 / T7901) protein is Acetyl-coenzyme A carboxylase carboxyl transferase subunit alpha.